The sequence spans 1025 residues: Multidrug resistance protein MdtC (1025 aa).

A run of 12 helical transmembrane segments spans residues F3–L23, E333–L353, I360–C380, L387–L407, V431–L451, F463–P483, L528–P548, V853–S873, V875–L895, L897–V917, P953–G973, and I984–V1004.

The protein belongs to the resistance-nodulation-cell division (RND) (TC 2.A.6) family. MdtC subfamily. In terms of assembly, part of a tripartite efflux system composed of MdtA, MdtB and MdtC. MdtC forms a heteromultimer with MdtB.

Its subcellular location is the cell inner membrane. Functionally, the MdtABC tripartite complex confers resistance against novobiocin and deoxycholate. The chain is Multidrug resistance protein MdtC from Escherichia coli O8 (strain IAI1).